A 444-amino-acid chain; its full sequence is Acyl-CoA 6-desaturase (444 aa).

Over 1–122 (MGKGGNQDEG…FRALRKTAED (122 aa)) the chain is Cytoplasmic. A Cytochrome b5 heme-binding domain is found at 18 to 95 (MPTFRWEEIQ…MKPLLIGELA (78 aa)). The chain crosses the membrane as a helical span at residues 123 to 143 (MNLFKSNQLFFLLHLAHIIAM). The Lumenal portion of the chain corresponds to 144-147 (ESIA). Residues 148–168 (WFTLFYFGNGWIPTIITAFVL) form a helical membrane-spanning segment. The Cytoplasmic segment spans residues 169–264 (ATSQAQAGWL…KYLPYNHQHE (96 aa)). Positions 180–184 (HDYGH) match the Histidine box-1 motif. Residues 217-221 (HFQHH) carry the Histidine box-2 motif. The chain crosses the membrane as a helical span at residues 265–285 (YFFLIGPPLLIPLYFQYQIIM). Residues 286–305 (TMIVRKYWADLAWAISYYTR) lie on the Lumenal side of the membrane. Residues 306 to 326 (FFITYIPFYGVLGSILFLNFI) traverse the membrane as a helical segment. At 327 to 444 (RFLESHWFVW…QLWLDAYLHK (118 aa)) the chain is on the cytoplasmic side. Positions 382-386 (QIEHH) match the Histidine box-3 motif.

Belongs to the fatty acid desaturase type 1 family.

The protein localises to the endoplasmic reticulum membrane. The catalysed reaction is (9Z,12Z)-octadecadienoyl-CoA + 2 Fe(II)-[cytochrome b5] + O2 + 2 H(+) = (6Z,9Z,12Z)-octadecatrienoyl-CoA + 2 Fe(III)-[cytochrome b5] + 2 H2O. It catalyses the reaction (9Z,12Z,15Z)-octadecatrienoyl-CoA + 2 Fe(II)-[cytochrome b5] + O2 + 2 H(+) = (6Z,9Z,12Z,15Z)-octadecatetraenoyl-CoA + 2 Fe(III)-[cytochrome b5] + 2 H2O. It carries out the reaction (9Z,12Z,15Z,18Z,21Z)-tetracosapentaenoyl-CoA + 2 Fe(II)-[cytochrome b5] + O2 + 2 H(+) = (6Z,9Z,12Z,15Z,18Z,21Z)-tetracosahexaenoyl-CoA + 2 Fe(III)-[cytochrome b5] + 2 H2O. The enzyme catalyses (11E)-octadecenoyl-CoA + 2 Fe(II)-[cytochrome b5] + O2 + 2 H(+) = (6Z,11E)-octadecadienoyl-CoA + 2 Fe(III)-[cytochrome b5] + 2 H2O. The catalysed reaction is (11Z,14Z)-eicosadienoyl-CoA + 2 Fe(II)-[cytochrome b5] + O2 + 2 H(+) = (8Z,11Z,14Z)-eicosatrienoyl-CoA + 2 Fe(III)-[cytochrome b5] + 2 H2O. It catalyses the reaction (11Z,14Z,17Z)-eicosatrienoyl-CoA + 2 Fe(II)-[cytochrome b5] + O2 + 2 H(+) = (8Z,11Z,14Z,17Z)-eicosatetraenoyl-CoA + 2 Fe(III)-[cytochrome b5] + 2 H2O. It participates in lipid metabolism; polyunsaturated fatty acid biosynthesis. In terms of biological role, involved in the biosynthesis of highly unsaturated fatty acids (HUFA) from the essential polyunsaturated fatty acids (PUFA) linoleic acid (LA) (18:2n-6) and alpha-linolenic acid (ALA) (18:3n-3) precursors, acting as a fatty acyl-coenzyme A (CoA) desaturase that introduces a cis double bond at carbon 6 of the fatty acyl chain. Catalyzes the first and rate limiting step in this pathway which is the desaturation of LA (18:2n-6) and ALA (18:3n-3) into gamma-linoleate (GLA) (18:3n-6) and stearidonate (18:4n-3), respectively. Subsequently, in the biosynthetic pathway of HUFA n-3 series, it desaturates tetracosapentaenoate (24:5n-3) to tetracosahexaenoate (24:6n-3), which is then converted to docosahexaenoate (DHA)(22:6n-3), an important lipid for nervous system function. It can also desaturate (11E)-octadecenoate (trans-vaccenoate, a metabolite in the biohydrogenation pathway of LA and the predominant trans fatty acid in cow milk) at carbon 6 generating (6Z,11E)-octadecadienoate. In addition to Delta-6 activity, this enzyme exhibits Delta-8 activity with slight biases toward n-3 fatty acyl-CoA substrates. This is Acyl-CoA 6-desaturase (FADS2) from Bos taurus (Bovine).